Consider the following 277-residue polypeptide: Myelin proteolipid protein (277 aa).

The Cytoplasmic segment spans residues 1–10 (MGLLECCARC). 3 S-palmitoyl cysteine lipidation sites follow: cysteine 6, cysteine 7, and cysteine 10. Residues 11 to 36 (LVGAPFASLVATGLCFFGVALFCGCG) traverse the membrane as a helical segment. Residues 37–59 (HEALTGTEKLIETYFSKNYQDYE) lie on the Extracellular side of the membrane. Residues 60 to 88 (YLINVIHAFQYVIYGTASFFFLYGALLLA) form a helical membrane-spanning segment. Residues 89-151 (EGFYTTGAVR…LGKWLGHPDK (63 aa)) lie on the Cytoplasmic side of the membrane. Cysteine 109 carries the S-palmitoyl cysteine lipid modification. Serine 114 bears the Phosphoserine mark. A phosphothreonine mark is found at threonine 116 and threonine 118. Residues cysteine 139 and cysteine 141 are each lipidated (S-palmitoyl cysteine). The helical transmembrane segment at 152–178 (FVGITYALTVVWLLVFACSAVPVYIYF) threads the bilayer. Over 179–238 (NTWTTCQSIAFPSKTSASIGTLCADARMYGVLPWNAFPGKVCGSNLLSICKTAEFQMTFH) the chain is Extracellular. 2 disulfide bridges follow: cysteine 184–cysteine 228 and cysteine 201–cysteine 220. Residue threonine 199 is the site of O-palmitoyl threonine attachment. A helical membrane pass occupies residues 239-268 (LFIAAFVGAAATLVSLLTFMIAATYNFAVL). Residues 269 to 277 (KLMGRGTKF) are Cytoplasmic-facing.

Belongs to the myelin proteolipid protein family. As to quaternary structure, interacts with MAL.

Its subcellular location is the cell membrane. It localises to the myelin membrane. Its function is as follows. This is the major myelin protein from the central nervous system. It plays an important role in the formation or maintenance of the multilamellar structure of myelin. This chain is Myelin proteolipid protein (PLP1), found in Oryctolagus cuniculus (Rabbit).